Consider the following 313-residue polypeptide: Pyrimidine-specific ribonucleoside hydrolase RihA (313 aa).

The active site involves histidine 240.

Belongs to the IUNH family. RihA subfamily.

In terms of biological role, hydrolyzes cytidine or uridine to ribose and cytosine or uracil, respectively. The polypeptide is Pyrimidine-specific ribonucleoside hydrolase RihA (Enterobacter sp. (strain 638)).